Here is a 661-residue protein sequence, read N- to C-terminus: Altered inheritance of mitochondria protein 3-1 (661 aa).

7 disordered regions span residues 19–99 (TKTV…YSGY), 116–142 (AQNTPYSSPAQQQPVSPQPPVQNSQYN), 154–194 (QPAG…TFQS), 263–419 (LPQQ…DSSS), 431–473 (RNIP…SPGI), 487–563 (YAGH…RKDN), and 615–661 (EAAT…FVHS). The span at 37 to 58 (KDKDTHHTDHHEEDEYSEDYHT) shows a compositional bias: basic and acidic residues. Positions 120 to 142 (PYSSPAQQQPVSPQPPVQNSQYN) are enriched in low complexity. Low complexity predominate over residues 263-318 (LPQQQQQQQQQPEYNTQLQQNQQLHNQQAYGQQQQIYSNNTQPQYVSQTQQTSYTQ). 2 stretches are compositionally biased toward polar residues: residues 319-328 (NAPPQQTRSP) and 356-371 (VNQTAITSTNSANEAL). Basic and acidic residues predominate over residues 390-399 (THRDRGRASV). Polar residues predominate over residues 406-419 (ENMQTNNSTIDSSS). Over residues 434–447 (PAPAVGPPGAATRA) the composition is skewed to low complexity. Composition is skewed to polar residues over residues 458–473 (SQSMSTNSVVETSPGI), 512–533 (RSTSTKMNTQPNPQTPISPSRD), and 541–552 (RSTVSSIQSSNR).

The protein belongs to the AIM3 family.

It is found in the membrane raft. This is Altered inheritance of mitochondria protein 3-1 (AIM3-1) from Candida glabrata (strain ATCC 2001 / BCRC 20586 / JCM 3761 / NBRC 0622 / NRRL Y-65 / CBS 138) (Yeast).